Consider the following 179-residue polypeptide: MSAVSTYAEALFGAAREKDELERVLDDLREFCRALRESEELALFFYGEQIPEREKRRAIEALTEGMSPLTTNFLKVLCDNRREEILEDVLRRYEEMVEDHLGRIEVEVVTATELSGEMQERIRERIARVLGGREVILRTSVDPEILGGAVFRFKDRLVDSSIRGRLEGLREAMLERGVV.

The protein belongs to the ATPase delta chain family. As to quaternary structure, F-type ATPases have 2 components, F(1) - the catalytic core - and F(0) - the membrane proton channel. F(1) has five subunits: alpha(3), beta(3), gamma(1), delta(1), epsilon(1). F(0) has three main subunits: a(1), b(2) and c(10-14). The alpha and beta chains form an alternating ring which encloses part of the gamma chain. F(1) is attached to F(0) by a central stalk formed by the gamma and epsilon chains, while a peripheral stalk is formed by the delta and b chains.

The protein resides in the cell membrane. Functionally, f(1)F(0) ATP synthase produces ATP from ADP in the presence of a proton or sodium gradient. F-type ATPases consist of two structural domains, F(1) containing the extramembraneous catalytic core and F(0) containing the membrane proton channel, linked together by a central stalk and a peripheral stalk. During catalysis, ATP synthesis in the catalytic domain of F(1) is coupled via a rotary mechanism of the central stalk subunits to proton translocation. Its function is as follows. This protein is part of the stalk that links CF(0) to CF(1). It either transmits conformational changes from CF(0) to CF(1) or is implicated in proton conduction. The chain is ATP synthase subunit delta from Rubrobacter xylanophilus (strain DSM 9941 / JCM 11954 / NBRC 16129 / PRD-1).